Here is a 275-residue protein sequence, read N- to C-terminus: Light-independent protochlorophyllide reductase iron-sulfur ATP-binding protein (275 aa).

ATP is bound by residues 12–17 (GIGKST) and Lys-41. Ser-16 contacts Mg(2+). [4Fe-4S] cluster contacts are provided by Cys-97 and Cys-131. An ATP-binding site is contributed by 182-183 (NR).

This sequence belongs to the NifH/BchL/ChlL family. Homodimer. Protochlorophyllide reductase is composed of three subunits; BchL, BchN and BchB. Requires [4Fe-4S] cluster as cofactor.

It carries out the reaction chlorophyllide a + oxidized 2[4Fe-4S]-[ferredoxin] + 2 ADP + 2 phosphate = protochlorophyllide a + reduced 2[4Fe-4S]-[ferredoxin] + 2 ATP + 2 H2O. It functions in the pathway porphyrin-containing compound metabolism; bacteriochlorophyll biosynthesis (light-independent). Functionally, component of the dark-operative protochlorophyllide reductase (DPOR) that uses Mg-ATP and reduced ferredoxin to reduce ring D of protochlorophyllide (Pchlide) to form chlorophyllide a (Chlide). This reaction is light-independent. The L component serves as a unique electron donor to the NB-component of the complex, and binds Mg-ATP. This is Light-independent protochlorophyllide reductase iron-sulfur ATP-binding protein from Chlorobium limicola (strain DSM 245 / NBRC 103803 / 6330).